The sequence spans 206 residues: Small ribosomal subunit protein uS4 (206 aa).

An S4 RNA-binding domain is found at 96 to 156 (CRLDNVVYRM…EKSKNQLRIA (61 aa)).

This sequence belongs to the universal ribosomal protein uS4 family. Part of the 30S ribosomal subunit. Contacts protein S5. The interaction surface between S4 and S5 is involved in control of translational fidelity.

In terms of biological role, one of the primary rRNA binding proteins, it binds directly to 16S rRNA where it nucleates assembly of the body of the 30S subunit. Functionally, with S5 and S12 plays an important role in translational accuracy. The polypeptide is Small ribosomal subunit protein uS4 (Ectopseudomonas mendocina (strain ymp) (Pseudomonas mendocina)).